The chain runs to 205 residues: LexA repressor (205 aa).

Residues arginine 28 to lysine 48 constitute a DNA-binding region (H-T-H motif). Active-site for autocatalytic cleavage activity residues include serine 122 and lysine 159.

Belongs to the peptidase S24 family. As to quaternary structure, homodimer.

It catalyses the reaction Hydrolysis of Ala-|-Gly bond in repressor LexA.. In terms of biological role, represses a number of genes involved in the response to DNA damage (SOS response), including recA and lexA. In the presence of single-stranded DNA, RecA interacts with LexA causing an autocatalytic cleavage which disrupts the DNA-binding part of LexA, leading to derepression of the SOS regulon and eventually DNA repair. The sequence is that of LexA repressor from Idiomarina loihiensis (strain ATCC BAA-735 / DSM 15497 / L2-TR).